The sequence spans 1547 residues: Transposon Ty3-G Gag-Pol polyprotein (1547 aa).

The residue at position 2 (S2) is an N-acetylserine. The CCHC-type zinc-finger motif lies at 265-282; sequence RLCFYCKKEGHRLNECRA. Catalysis depends on D336, which acts as the For protease activity; shared with dimeric partner. A Reverse transcriptase domain is found at 620–797; that stretch reads LDNKFIVPSK…EETEFLGYSI (178 aa). Mg(2+) is bound by residues D686, D748, D749, D893, E936, and D961. An RNase H Ty3/gyspy-type domain is found at 893-1011; it reads DASKDGIGAV…VADAISRAVY (119 aa). An integrase-type zinc finger-like region spans residues 1106 to 1145; the sequence is HTLFGGHFGVTVTLAKISPIYYWPKLQHSIIQYIRTCVQC. Residues 1159 to 1324 form the Integrase catalytic domain; that stretch reads LQPLPIAEGR…SPFEIDLGYL (166 aa). Residues D1175 and D1236 each contribute to the Mg(2+) site.

In terms of assembly, the protease is a homodimer, whose active site consists of two apposed aspartic acid residues. In terms of processing, initially, virus-like particles (VLPs) are composed of the structural unprocessed proteins Gag and Gag-Pol, and also contain the host initiator methionine tRNA (tRNA(i)-Met) which serves as a primer for minus-strand DNA synthesis, and a dimer of genomic Ty RNA. Processing of the polyproteins occurs within the particle and proceeds by an ordered pathway, called maturation. First, the protease (PR) is released by autocatalytic cleavage of the Gag-Pol polyprotein, and this cleavage is a prerequisite for subsequent processing at the remaining sites to release the mature structural and catalytic proteins. Maturation takes place prior to the RT reaction and is required to produce transposition-competent VLPs.

The protein localises to the cytoplasm. It localises to the nucleus. It catalyses the reaction DNA(n) + a 2'-deoxyribonucleoside 5'-triphosphate = DNA(n+1) + diphosphate. The catalysed reaction is Endonucleolytic cleavage to 5'-phosphomonoester.. Functionally, capsid protein (CA) is the structural component of the virus-like particle (VLP), forming the shell that encapsulates the genomic RNA-nucleocapsid complex. Its function is as follows. Nucleocapsid protein p11 (NC) forms the nucleocore that coats the retro-elements dimeric RNA. Binds these RNAs through its zinc fingers. Promotes primer tRNA(i)-Met annealing to the multipartite primer-binding site (PBS), dimerization of Ty3 RNA and initiation of reverse transcription. The aspartyl protease (PR) mediates the proteolytic cleavages of the Gag and Gag-Pol polyproteins after assembly of the VLP. In terms of biological role, reverse transcriptase/ribonuclease H (RT) is a multifunctional enzyme that catalyzes the conversion of the retro-elements RNA genome into dsDNA within the VLP. The enzyme displays a DNA polymerase activity that can copy either DNA or RNA templates, and a ribonuclease H (RNase H) activity that cleaves the RNA strand of RNA-DNA heteroduplexes during plus-strand synthesis and hydrolyzes RNA primers. The conversion leads to a linear dsDNA copy of the retrotransposon that includes long terminal repeats (LTRs) at both ends. Functionally, integrase (IN) targets the VLP to the nucleus, where a subparticle preintegration complex (PIC) containing at least integrase and the newly synthesized dsDNA copy of the retrotransposon must transit the nuclear membrane. Once in the nucleus, integrase performs the integration of the dsDNA into the host genome. In Saccharomyces cerevisiae (strain ATCC 204508 / S288c) (Baker's yeast), this protein is Transposon Ty3-G Gag-Pol polyprotein (TY3B-G).